The following is a 596-amino-acid chain: Putative ankyrin repeat protein FPV024 (596 aa).

13 ANK repeats span residues 5–34 (KLRK…TFSN), 37–66 (ALST…DINK), 68–96 (KSPP…DIEK), 99–128 (LGNS…DPNT), 130–158 (FINY…SLNI), 162–191 (HFKT…SLTI), 195–225 (YNNH…PVNE), 229–258 (LERT…DPNI), 262–291 (CLGT…NVNI), 295–324 (TIDT…NTRL), 326–355 (SRNP…EVNI), 359–389 (EGYT…NPNM), and 394–423 (NENT…DVHS).

In Fowlpox virus (strain NVSL) (FPV), this protein is Putative ankyrin repeat protein FPV024.